The sequence spans 471 residues: Putative multidrug resistance protein MdtD (471 aa).

Over 1-11 (MTDLPDSTRWQ) the chain is Periplasmic. Residues 12 to 32 (LWIVAFGFFMQSLDTTIVNTA) traverse the membrane as a helical segment. At 33 to 48 (LPSMAQSLGESPLHMH) the chain is on the cytoplasmic side. Residues 49–69 (MVIVSYVLTVAVMLPASGWLA) form a helical membrane-spanning segment. At 70–76 (DKVGVRN) the chain is on the periplasmic side. A helical membrane pass occupies residues 77–97 (IFFTAIVLFTLGSLFCALSAT). Residues 98–101 (LNEL) are Cytoplasmic-facing. The helical transmembrane segment at 102–124 (LLARALQGVGGAMMVPVGRLTVM) threads the bilayer. Over 125 to 137 (KIVPREQYMAAMT) the chain is Periplasmic. A helical membrane pass occupies residues 138 to 158 (FVTLPGQVGPLLGPALGGLLV). Topologically, residues 159–164 (EYASWH) are cytoplasmic. Residues 165–185 (WIFLINIPVGIIGAIATLMLM) traverse the membrane as a helical segment. Topologically, residues 186 to 196 (PNYTMQTRRFD) are periplasmic. A helical transmembrane segment spans residues 197 to 217 (LSGFLLLAVGMAVLTLALDGS). Residues 218-224 (KGTGLSP) are Cytoplasmic-facing. A helical transmembrane segment spans residues 225 to 245 (LAIAGLAAIGVVALVLYLLHA). Over 246 to 262 (RNNNRALFSLKLFRTRT) the chain is Periplasmic. Residues 263–283 (FSLGLAGSFAGRIGSGMLPFM) form a helical membrane-spanning segment. The Cytoplasmic portion of the chain corresponds to 284 to 285 (TP). The helical transmembrane segment at 286-306 (VFLQIGLGFSPFHAGLMMIPM) threads the bilayer. At 307-341 (VLGSMGMKRIVVQVVNRFGYRRVLVATTLGLSLVT) the chain is on the periplasmic side. A helical transmembrane segment spans residues 342–362 (LLFMTTALLGWYYVLPFVLFL). Residues 363 to 395 (QGMVNSTRFSSMNTLTLKDLPDNLASSGNSLLS) are Cytoplasmic-facing. A helical transmembrane segment spans residues 396–416 (MIMQLSMSIGVTIAGLLLGLF). The Periplasmic segment spans residues 417-430 (GSQHVSVDSSTTQT). Residues 431-451 (VFMYTWLSMALIIALPAFIFA) form a helical membrane-spanning segment. At 452–471 (RVPNDTHQNVAISRRKRSAQ) the chain is on the cytoplasmic side.

It belongs to the major facilitator superfamily. TCR/Tet family.

The protein localises to the cell inner membrane. The sequence is that of Putative multidrug resistance protein MdtD from Escherichia fergusonii (strain ATCC 35469 / DSM 13698 / CCUG 18766 / IAM 14443 / JCM 21226 / LMG 7866 / NBRC 102419 / NCTC 12128 / CDC 0568-73).